A 459-amino-acid polypeptide reads, in one-letter code: Methylenetetrahydrofolate--tRNA-(uracil-5-)-methyltransferase TrmFO (459 aa).

26–31 (GGGLAG) is a binding site for FAD.

Belongs to the MnmG family. TrmFO subfamily. It depends on FAD as a cofactor.

The protein resides in the cytoplasm. It carries out the reaction uridine(54) in tRNA + (6R)-5,10-methylene-5,6,7,8-tetrahydrofolate + NADH + H(+) = 5-methyluridine(54) in tRNA + (6S)-5,6,7,8-tetrahydrofolate + NAD(+). It catalyses the reaction uridine(54) in tRNA + (6R)-5,10-methylene-5,6,7,8-tetrahydrofolate + NADPH + H(+) = 5-methyluridine(54) in tRNA + (6S)-5,6,7,8-tetrahydrofolate + NADP(+). In terms of biological role, catalyzes the folate-dependent formation of 5-methyl-uridine at position 54 (M-5-U54) in all tRNAs. In Synechococcus sp. (strain JA-2-3B'a(2-13)) (Cyanobacteria bacterium Yellowstone B-Prime), this protein is Methylenetetrahydrofolate--tRNA-(uracil-5-)-methyltransferase TrmFO.